A 266-amino-acid chain; its full sequence is Protein-ADP-ribose hydrolase (266 aa).

Residues 74 to 265 (TDLKDLKPIK…LYKEAFNRDA (192 aa)) form the Macro domain. Positions 93, 94, and 107 each coordinate ADP-D-ribose. Positions 113, 118, and 120 each coordinate Zn(2+). Cys-120, Ile-121, Asp-122, Ser-212, Thr-213, Gly-214, and Phe-216 together coordinate ADP-D-ribose.

The protein belongs to the MacroD-type family. Zn-Macro subfamily. It depends on Zn(2+) as a cofactor.

It carries out the reaction 4-O-(ADP-D-ribosyl)-L-aspartyl-[protein] + H2O = L-aspartyl-[protein] + ADP-D-ribose + H(+). Functionally, ADP-ribosylhydrolase that specifically reverses the SirTM-mediated mono-ADP-ribosylation at an asparatate residue of GcvH-L, by releasing ADP-ribose from the target protein. May play a role in the regulation of the response to host-induced oxidative stress. In Staphylococcus aureus (strain MRSA252), this protein is Protein-ADP-ribose hydrolase.